The sequence spans 99 residues: NADH dehydrogenase [ubiquinone] 1 alpha subcomplex subunit 2 (99 aa).

Position 2 is an N-acetylalanine (Ala-2). A disulfide bond links Cys-24 and Cys-58. Lys-64 bears the N6-acetyllysine; alternate mark. An N6-succinyllysine; alternate modification is found at Lys-64.

This sequence belongs to the complex I NDUFA2 subunit family. Complex I is composed of 45 different subunits.

It localises to the mitochondrion inner membrane. In terms of biological role, accessory subunit of the mitochondrial membrane respiratory chain NADH dehydrogenase (Complex I), that is believed not to be involved in catalysis. Complex I functions in the transfer of electrons from NADH to the respiratory chain. The immediate electron acceptor for the enzyme is believed to be ubiquinone. The sequence is that of NADH dehydrogenase [ubiquinone] 1 alpha subcomplex subunit 2 (NDUFA2) from Homo sapiens (Human).